The chain runs to 469 residues: ATP-dependent protease ATPase subunit HslU (469 aa).

ATP is bound by residues isoleucine 24, 66-71 (GVGKTE), aspartate 282, glutamate 347, and arginine 419.

It belongs to the ClpX chaperone family. HslU subfamily. In terms of assembly, a double ring-shaped homohexamer of HslV is capped on each side by a ring-shaped HslU homohexamer. The assembly of the HslU/HslV complex is dependent on binding of ATP.

The protein resides in the cytoplasm. Its function is as follows. ATPase subunit of a proteasome-like degradation complex; this subunit has chaperone activity. The binding of ATP and its subsequent hydrolysis by HslU are essential for unfolding of protein substrates subsequently hydrolyzed by HslV. HslU recognizes the N-terminal part of its protein substrates and unfolds these before they are guided to HslV for hydrolysis. This is ATP-dependent protease ATPase subunit HslU from Listeria monocytogenes serotype 4b (strain CLIP80459).